We begin with the raw amino-acid sequence, 455 residues long: UDP-N-acetylmuramoylalanine--D-glutamate ligase (455 aa).

Position 120 to 126 (120 to 126 (GSNGKTT)) interacts with ATP.

It belongs to the MurCDEF family.

It localises to the cytoplasm. The enzyme catalyses UDP-N-acetyl-alpha-D-muramoyl-L-alanine + D-glutamate + ATP = UDP-N-acetyl-alpha-D-muramoyl-L-alanyl-D-glutamate + ADP + phosphate + H(+). Its pathway is cell wall biogenesis; peptidoglycan biosynthesis. In terms of biological role, cell wall formation. Catalyzes the addition of glutamate to the nucleotide precursor UDP-N-acetylmuramoyl-L-alanine (UMA). This is UDP-N-acetylmuramoylalanine--D-glutamate ligase from Pediococcus pentosaceus (strain ATCC 25745 / CCUG 21536 / LMG 10740 / 183-1w).